Consider the following 205-residue polypeptide: Holliday junction branch migration complex subunit RuvA (205 aa).

The interval 1–64 is domain I; it reads MIGKLKGTID…EDQLKLFGFL (64 aa). Residues 65 to 143 form a domain II region; it reads SALEREWFRL…AFSGEMAPSI (79 aa). Residues 144–153 form a flexible linker region; sequence GLKQELGEGV. The segment at 153–205 is domain III; it reads VAAAPVADAVSALTNLGYSRDQAANAVAAALKNGGEGGDSAKLIRLGLKELSR.

This sequence belongs to the RuvA family. As to quaternary structure, homotetramer. Forms an RuvA(8)-RuvB(12)-Holliday junction (HJ) complex. HJ DNA is sandwiched between 2 RuvA tetramers; dsDNA enters through RuvA and exits via RuvB. An RuvB hexamer assembles on each DNA strand where it exits the tetramer. Each RuvB hexamer is contacted by two RuvA subunits (via domain III) on 2 adjacent RuvB subunits; this complex drives branch migration. In the full resolvosome a probable DNA-RuvA(4)-RuvB(12)-RuvC(2) complex forms which resolves the HJ.

The protein resides in the cytoplasm. Its function is as follows. The RuvA-RuvB-RuvC complex processes Holliday junction (HJ) DNA during genetic recombination and DNA repair, while the RuvA-RuvB complex plays an important role in the rescue of blocked DNA replication forks via replication fork reversal (RFR). RuvA specifically binds to HJ cruciform DNA, conferring on it an open structure. The RuvB hexamer acts as an ATP-dependent pump, pulling dsDNA into and through the RuvAB complex. HJ branch migration allows RuvC to scan DNA until it finds its consensus sequence, where it cleaves and resolves the cruciform DNA. In Rhizobium meliloti (strain 1021) (Ensifer meliloti), this protein is Holliday junction branch migration complex subunit RuvA.